A 221-amino-acid polypeptide reads, in one-letter code: Probable septum site-determining protein MinC (221 aa).

It belongs to the MinC family. Interacts with MinD and FtsZ.

Cell division inhibitor that blocks the formation of polar Z ring septums. Rapidly oscillates between the poles of the cell to destabilize FtsZ filaments that have formed before they mature into polar Z rings. Prevents FtsZ polymerization. This Shewanella sp. (strain ANA-3) protein is Probable septum site-determining protein MinC.